Reading from the N-terminus, the 512-residue chain is MAQATATTEKLNKFEKLKLEKDGLAVRDQIQHFASIGWEAMDPGDREHRLKWLGIFWRPVTPGRFMARLRIPSGILQSQQLNALANFLQRYGDQASIDITTRQNLQLRGLLLEDTPEFLERLHAVGLTSVQSGMDNVRNITGSPVAGLDAAELFDTRSLIQALQDDLTAAGQGNSEFTNLPRKFNIAIEGGRDNSIHAEINDLAFTPAYQDGTLGFNVWVGGFFSSTRVAPAIPLNAWVPADHSVIRLSRAILEVFRDNGSRGNRQKTRLMWLIDEWGIERFRQVVSEAYGAPLAAAAPELMDWEKRDFLGVHPQKQAGLNFVGLHVPVGRLTTEDLYELARLADTYGQGEVRLTVEQNVILTHIPDAQLPTLLAEPLLTRFSPQPAPLSRGTVSCTGSQYCNFALIETKQRAIAIAQSLEAELDLPRPVRIHWTGCPNSCGQPQVADIGLMGAKVRKDGQMVEGVDIFLGGKVGYDAHLGEKAMTGVACEDLPDVLRQLLIERFGAQARSH.

Residues Cys396, Cys402, Cys437, and Cys441 each contribute to the [4Fe-4S] cluster site. Residue Cys441 participates in siroheme binding.

Belongs to the nitrite and sulfite reductase 4Fe-4S domain family.

It carries out the reaction 6 oxidized [2Fe-2S]-[ferredoxin] + NH4(+) + 2 H2O = nitrite + 6 reduced [2Fe-2S]-[ferredoxin] + 8 H(+). The sequence is that of Ferredoxin--nitrite reductase (nirA) from Synechococcus elongatus (strain ATCC 33912 / PCC 7942 / FACHB-805) (Anacystis nidulans R2).